A 476-amino-acid chain; its full sequence is Sulfate adenylyltransferase subunit 1 (476 aa).

The tr-type G domain occupies 24–241 (KSLLRFLTCG…EDVDFVQEQE (218 aa)). Positions 33 to 40 (GSVDDGKS) are G1. 33-40 (GSVDDGKS) is a binding site for GTP. The tract at residues 91–95 (GITID) is G2. Positions 112 to 115 (DTPG) are G3. Residues 112 to 116 (DTPGH) and 167 to 170 (NKMD) each bind GTP. A G4 region spans residues 167 to 170 (NKMD). Positions 205–207 (SAL) are G5.

This sequence belongs to the TRAFAC class translation factor GTPase superfamily. Classic translation factor GTPase family. CysN/NodQ subfamily. As to quaternary structure, heterodimer composed of CysD, the smaller subunit, and CysN.

The enzyme catalyses sulfate + ATP + H(+) = adenosine 5'-phosphosulfate + diphosphate. The protein operates within sulfur metabolism; hydrogen sulfide biosynthesis; sulfite from sulfate: step 1/3. With CysD forms the ATP sulfurylase (ATPS) that catalyzes the adenylation of sulfate producing adenosine 5'-phosphosulfate (APS) and diphosphate, the first enzymatic step in sulfur assimilation pathway. APS synthesis involves the formation of a high-energy phosphoric-sulfuric acid anhydride bond driven by GTP hydrolysis by CysN coupled to ATP hydrolysis by CysD. The polypeptide is Sulfate adenylyltransferase subunit 1 (Photobacterium profundum (strain SS9)).